We begin with the raw amino-acid sequence, 594 residues long: MADLLSSLKNLSHSSGVYQYFDKNRQLLYIGKAKNLKKRIKSYFSIHNNEITPNHRASLRIQMMVKQIAFLETILVENEQDALILENSLIKQLKPKYNILLRDDKTYPYIYMDFSTDFPIPLITRKILKQPGVKYFGPFTSGAKDILDSLYELLPLVQKKNCIKDKKACMFYQIERCKAPCENKITKEEYSKIAKECLEMIENRDKLIKELELKMERLSNNLRFEEALIYRDRIAKIQKIAPFTCMDLAKLYDLDIFAFYGASNKAVLVKMFMRGGKIISSAFEKIHSLNGFDTDEAMKQAIINHYQSHLPLMPEQILLSACSNEALKELQEFISHQYSKKIALSIPKKGDKLALIEIAMKNAQEIFSQEKTSDEDLILEEVRSLFNLECVPYRVEIFDTSHHSNSQCVGGMVVYENNAFQKNSYRRYHLKGSNEYDQMSELLTRRALDFAKEPPPNLWVIDGGRAQLNIALEILKSSGSFVEVIAISKEKRDSKAYRSKGGAKDIIHTPSDTFKLLPSDKRLQWVQKLRDESHRYAINFHRSTKLKNMKQIALLKEKGIGEASVKKLLDYFGSFEAIEKASEQEKNAVLKKRI.

Positions 13 to 99 (HSSGVYQYFD…IKQLKPKYNI (87 aa)) constitute a GIY-YIG domain. Residues 205–240 (DKLIKELELKMERLSNNLRFEEALIYRDRIAKIQKI) enclose the UVR domain.

It belongs to the UvrC family. In terms of assembly, interacts with UvrB in an incision complex.

The protein localises to the cytoplasm. In terms of biological role, the UvrABC repair system catalyzes the recognition and processing of DNA lesions. UvrC both incises the 5' and 3' sides of the lesion. The N-terminal half is responsible for the 3' incision and the C-terminal half is responsible for the 5' incision. This is UvrABC system protein C from Helicobacter pylori (strain HPAG1).